Consider the following 460-residue polypeptide: ATP synthase subunit beta (460 aa).

Glycine 149 to threonine 156 is an ATP binding site.

The protein belongs to the ATPase alpha/beta chains family. As to quaternary structure, F-type ATPases have 2 components, CF(1) - the catalytic core - and CF(0) - the membrane proton channel. CF(1) has five subunits: alpha(3), beta(3), gamma(1), delta(1), epsilon(1). CF(0) has three main subunits: a(1), b(2) and c(9-12). The alpha and beta chains form an alternating ring which encloses part of the gamma chain. CF(1) is attached to CF(0) by a central stalk formed by the gamma and epsilon chains, while a peripheral stalk is formed by the delta and b chains.

The protein resides in the cell membrane. It carries out the reaction ATP + H2O + 4 H(+)(in) = ADP + phosphate + 5 H(+)(out). In terms of biological role, produces ATP from ADP in the presence of a proton gradient across the membrane. The catalytic sites are hosted primarily by the beta subunits. This is ATP synthase subunit beta from Acholeplasma laidlawii (strain PG-8A).